A 565-amino-acid polypeptide reads, in one-letter code: Liver carboxylesterase 1 (565 aa).

A signal peptide spans 1 to 18; it reads MWLCALSLISLTACLSLG. Cysteines 87 and 116 form a disulfide. Ser-221 serves as the catalytic Acyl-ester intermediate. An intrachain disulfide couples Cys-273 to Cys-284. The active-site Charge relay system is the Glu-353. Ser-378 is modified (phosphoserine). N-linked (GlcNAc...) asparagine glycosylation is present at Asn-388. His-466 acts as the Charge relay system in catalysis. Asn-489 carries N-linked (GlcNAc...) asparagine glycosylation.

This sequence belongs to the type-B carboxylesterase/lipase family. In terms of assembly, homotrimer and homohexamer. Binds to beta-glucuronidase. In terms of tissue distribution, detected in kidney, liver and lung.

It is found in the endoplasmic reticulum lumen. The protein resides in the cytoplasm. The protein localises to the lipid droplet. The catalysed reaction is a carboxylic ester + H2O = an alcohol + a carboxylate + H(+). The enzyme catalyses cholesteryl (9Z-octadecenoate) + H2O = cholesterol + (9Z)-octadecenoate + H(+). It carries out the reaction 2-(5Z,8Z,11Z,14Z-eicosatetraenoyl)-glycerol + H2O = glycerol + (5Z,8Z,11Z,14Z)-eicosatetraenoate + H(+). It catalyses the reaction prostaglandin E2 1-glyceryl ester + H2O = prostaglandin E2 + glycerol + H(+). The catalysed reaction is a cholesterol ester + H2O = cholesterol + a fatty acid + H(+). The enzyme catalyses prostaglandin F2alpha 1-glyceryl ester + H2O = prostaglandin F2alpha + glycerol + H(+). In terms of biological role, involved in the detoxification of xenobiotics and in the activation of ester and amide prodrugs. Hydrolyzes aromatic and aliphatic esters, but has no catalytic activity toward amides or a fatty acyl-CoA ester. Displays fatty acid ethyl ester synthase activity, catalyzing the ethyl esterification of oleic acid to ethyloleate. Converts monoacylglycerides to free fatty acids and glycerol. Hydrolyzes of 2-arachidonoylglycerol and prostaglandins. Hydrolyzes cellular cholesteryl esters to free cholesterols and promotes reverse cholesterol transport (RCT) by facilitating both the initial and final steps in the process. First of all, allows free cholesterol efflux from macrophages to extracellular cholesterol acceptors and secondly, releases free cholesterol from lipoprotein-delivered cholesteryl esters in the liver for bile acid synthesis or direct secretion into the bile. In Mus musculus (Mouse), this protein is Liver carboxylesterase 1.